A 155-amino-acid polypeptide reads, in one-letter code: Small ribosomal subunit protein uS7c (155 aa).

It belongs to the universal ribosomal protein uS7 family. In terms of assembly, part of the 30S ribosomal subunit.

It is found in the plastid. The protein resides in the chloroplast. Functionally, one of the primary rRNA binding proteins, it binds directly to 16S rRNA where it nucleates assembly of the head domain of the 30S subunit. This Staurastrum punctulatum (Green alga) protein is Small ribosomal subunit protein uS7c (rps7).